Here is a 373-residue protein sequence, read N- to C-terminus: UDP-N-acetylglucosamine--N-acetylmuramyl-(pentapeptide) pyrophosphoryl-undecaprenol N-acetylglucosamine transferase (373 aa).

UDP-N-acetyl-alpha-D-glucosamine-binding positions include 14 to 16 (TAG), Asn128, Arg165, Ser199, and Gln295.

It belongs to the glycosyltransferase 28 family. MurG subfamily.

Its subcellular location is the cell membrane. It carries out the reaction di-trans,octa-cis-undecaprenyl diphospho-N-acetyl-alpha-D-muramoyl-L-alanyl-D-glutamyl-meso-2,6-diaminopimeloyl-D-alanyl-D-alanine + UDP-N-acetyl-alpha-D-glucosamine = di-trans,octa-cis-undecaprenyl diphospho-[N-acetyl-alpha-D-glucosaminyl-(1-&gt;4)]-N-acetyl-alpha-D-muramoyl-L-alanyl-D-glutamyl-meso-2,6-diaminopimeloyl-D-alanyl-D-alanine + UDP + H(+). Its pathway is cell wall biogenesis; peptidoglycan biosynthesis. Its function is as follows. Cell wall formation. Catalyzes the transfer of a GlcNAc subunit on undecaprenyl-pyrophosphoryl-MurNAc-pentapeptide (lipid intermediate I) to form undecaprenyl-pyrophosphoryl-MurNAc-(pentapeptide)GlcNAc (lipid intermediate II). The chain is UDP-N-acetylglucosamine--N-acetylmuramyl-(pentapeptide) pyrophosphoryl-undecaprenol N-acetylglucosamine transferase from Mycobacterium sp. (strain KMS).